The primary structure comprises 590 residues: G protein-coupled receptor kinase 5 (590 aa).

The segment at 1–185 (MELENIVANT…LERQPVTKNT (185 aa)) is N-terminal. Residues 20-39 (GGKRKGKSKKWKEILKFPHI) are interaction with calmodulin. An RGS domain is found at 53 to 171 (YYSLCDKQPI…LDSMYFDRFL (119 aa)). The residue at position 136 (serine 136) is a Phosphoserine. In terms of domain architecture, Protein kinase spans 186-448 (FRQYRVLGKG…AAEVKRHPFF (263 aa)). Residues 192–200 (LGKGGFGEV) and lysine 215 each bind ATP. Aspartate 311 functions as the Proton acceptor in the catalytic mechanism. The short motif at 388 to 395 (RKEKVKRE) is the Nuclear localization signal element. Residues 449-514 (RNMNFKRLEA…GSVPIPWQNE (66 aa)) enclose the AGC-kinase C-terminal domain. Serine 484 is subject to Phosphoserine; by autocatalysis. A Phosphothreonine; by autocatalysis modification is found at threonine 485. The segment at 546 to 565 (PKKGLFHRLFRRQHQSNSKS) is sufficient for membrane localization. Residues 557 to 590 (RQHQSNSKSSPTPKTSCNHRINSNHINSNSTGSS) are disordered. The segment covering 561 to 590 (SNSKSSPTPKTSCNHRINSNHINSNSTGSS) has biased composition (low complexity). Serine 579 carries the post-translational modification Phosphoserine.

The protein belongs to the protein kinase superfamily. AGC Ser/Thr protein kinase family. GPRK subfamily. As to quaternary structure, interacts with ST13 (via the C-terminus 303-319 AA). Interacts with TP53/p53. Interacts with HTR4 (via C-terminus 330-346 AA); this interaction is promoted by 5-HT (serotonin). Interacts with HDAC5. Interacts with GIT1. Autophosphorylated. Autophosphorylation may play a critical role in the regulation of GRK5 kinase activity.

It is found in the cytoplasm. It localises to the nucleus. Its subcellular location is the cell membrane. The catalysed reaction is [G-protein-coupled receptor] + ATP = [G-protein-coupled receptor]-phosphate + ADP + H(+). With respect to regulation, inhibited by calmodulin with an IC(50) of 50 nM. Calmodulin inhibits GRK5 association with receptor and phospholipid. Its function is as follows. Serine/threonine kinase that phosphorylates preferentially the activated forms of a variety of G-protein-coupled receptors (GPCRs). Such receptor phosphorylation initiates beta-arrestin-mediated receptor desensitization, internalization, and signaling events leading to their down-regulation. Phosphorylates a variety of GPCRs, including adrenergic receptors, muscarinic acetylcholine receptors (more specifically Gi-coupled M2/M4 subtypes), dopamine receptors and opioid receptors. In addition to GPCRs, also phosphorylates various substrates: Hsc70-interacting protein/ST13, TP53/p53, HDAC5, and arrestin-1/ARRB1. Phosphorylation of ARRB1 by GRK5 inhibits G-protein independent MAPK1/MAPK3 signaling downstream of 5HT4-receptors. Phosphorylation of HDAC5, a repressor of myocyte enhancer factor 2 (MEF2) leading to nuclear export of HDAC5 and allowing MEF2-mediated transcription. Phosphorylation of TP53/p53, a crucial tumor suppressor, inhibits TP53/p53-mediated apoptosis. Phosphorylation of ST13 regulates internalization of the chemokine receptor. Phosphorylates rhodopsin (RHO) (in vitro) and a non G-protein-coupled receptor, LRP6 during Wnt signaling (in vitro). In Mus musculus (Mouse), this protein is G protein-coupled receptor kinase 5 (Grk5).